The following is an 88-amino-acid chain: Long neurotoxin 31 (88 aa).

The N-terminal stretch at 1–21 (MKTLLLTLVVVTIVCLDLGNS) is a signal peptide. Intrachain disulfides connect Cys24/Cys42, Cys35/Cys63, Cys48/Cys52, Cys67/Cys78, and Cys79/Cys84.

It belongs to the three-finger toxin family. Long-chain subfamily. Type II alpha-neurotoxin sub-subfamily. As to expression, expressed by the venom gland.

It localises to the secreted. Functionally, binds with high affinity to muscular (alpha-1/CHRNA1) and neuronal (alpha-7/CHRNA7) nicotinic acetylcholine receptor (nAChR) and inhibits acetylcholine from binding to the receptor, thereby impairing neuromuscular and neuronal transmission. The polypeptide is Long neurotoxin 31 (Drysdalia coronoides (White-lipped snake)).